The chain runs to 339 residues: RNA 3'-terminal phosphate cyclase (339 aa).

ATP contacts are provided by residues Q103 and 283–287 (HLADQ). Residue H308 is the Tele-AMP-histidine intermediate of the active site.

It belongs to the RNA 3'-terminal cyclase family. Type 1 subfamily.

It is found in the cytoplasm. It carries out the reaction a 3'-end 3'-phospho-ribonucleotide-RNA + ATP = a 3'-end 2',3'-cyclophospho-ribonucleotide-RNA + AMP + diphosphate. Its function is as follows. Catalyzes the conversion of 3'-phosphate to a 2',3'-cyclic phosphodiester at the end of RNA. The mechanism of action of the enzyme occurs in 3 steps: (A) adenylation of the enzyme by ATP; (B) transfer of adenylate to an RNA-N3'P to produce RNA-N3'PP5'A; (C) and attack of the adjacent 2'-hydroxyl on the 3'-phosphorus in the diester linkage to produce the cyclic end product. The biological role of this enzyme is unknown but it is likely to function in some aspects of cellular RNA processing. The polypeptide is RNA 3'-terminal phosphate cyclase (Salmonella enteritidis PT4 (strain P125109)).